Consider the following 81-residue polypeptide: RNA-binding protein Hfq (81 aa).

Residues 9–68 enclose the Sm domain; sequence DPFLNVLRRERVPVFIYLINGIKLQGEIESFDKFVILLRNTVNQMIYKHAISTIVPSRVV.

The protein belongs to the Hfq family. Homohexamer.

In terms of biological role, RNA chaperone that binds small regulatory RNA (sRNAs) and mRNAs to facilitate mRNA translational regulation in response to envelope stress, environmental stress and changes in metabolite concentrations. Also binds with high specificity to tRNAs. This Blochmanniella pennsylvanica (strain BPEN) protein is RNA-binding protein Hfq.